Reading from the N-terminus, the 665-residue chain is F-box/WD repeat-containing protein lin-23 (665 aa).

In terms of domain architecture, F-box spans 81–127; sequence RDFISNLPAHLVELILFNVNSDSLKSCEEVSTSWRCALARGQHWKKL. WD repeat units lie at residues 220 to 257, 260 to 299, 301 to 337, 343 to 380, 383 to 420, 423 to 460, and 472 to 509; these read ENSKGVYCLQYDDDKIVSGLRDNTIKIWDRKDYSCSRI, GHTGSVLCLQYDNRVIISGSSDATVRVWDVETGECIKTLI, HCEAVLHLRFANGIMVTCSKDRSIAVWDMVSPRDITI, GHRAAVNVVDFDDRYIVSASGDRTIKVWSMDTLEFVRT, GHRRGIACLQYRGRLVVSGSSDNTIRLWDIHSGVCLRV, GHEELVRCIRFDEKRIVSGAYDGKIKVWDLQAALDPRA, and QHTGRVFRLQFDDFQIVSSSHDDTILIWDFLDAPPSGL. The interval 574–665 is disordered; that stretch reads AAAEAARGAG…VDEEMPDGGP (92 aa). Acidic residues-rich tracts occupy residues 584 to 595 and 655 to 665; these read DNDESSSEEDLD and DVDEEMPDGGP.

As to quaternary structure, part of a SCF (SKP1-cullin-F-box) protein ligase complex.

It localises to the cytoplasm. In terms of biological role, functions cell autonomously to negatively regulate cell cycle progression. Required to restrain cell proliferation in response to developmental cues. Probably recognizes and binds to some proteins and promotes their ubiquitination and degradation. The protein is F-box/WD repeat-containing protein lin-23 (lin-23) of Caenorhabditis elegans.